The following is a 227-amino-acid chain: MGRGRVQLKRIENKINRQVTFSKRRSGLLKKAHEISVLCDAEVGLIVFSTKGKLFEYANDSCMERILERYERYSFAEKQLVPTDHTSPVSWTLEHRKLKARLEVLQRNQKHYVGEDLESLSMKELQNLEHQLDSALKHIRSRKNQLMHESISVLQKKDRALQEQNNQLSKKVKEREKSAQQISGINSSSLFAHTDFYLGTYQSTNVIDNGKWKEVVLHSSKVQLIIL.

In terms of domain architecture, MADS-box spans 3-57 (RGRVQLKRIENKINRQVTFSKRRSGLLKKAHEISVLCDAEVGLIVFSTKGKLFEY). The K-box domain occupies 88–178 (PVSWTLEHRK…SKKVKEREKS (91 aa)).

In terms of tissue distribution, flower specific.

It localises to the nucleus. Functionally, probable transcription factor. The protein is Agamous-like MADS-box protein AGL8 homolog (TDR4) of Solanum lycopersicum (Tomato).